The chain runs to 314 residues: Tyrosine recombinase XerC (314 aa).

The Core-binding (CB) domain maps to 1–85 (MNEQVEAFLR…AVKSFFTFLT (85 aa)). Positions 106-291 (DLPRALTPRQ…NHESSHTPHA (186 aa)) constitute a Tyr recombinase domain. Residues arginine 147, lysine 171, histidine 243, arginine 246, and histidine 269 contribute to the active site. Tyrosine 278 serves as the catalytic O-(3'-phospho-DNA)-tyrosine intermediate. A disordered region spans residues 284-314 (ESSHTPHAHPAPRASEVNGVRDEQALVPEEK). The segment covering 302–314 (GVRDEQALVPEEK) has biased composition (basic and acidic residues).

It belongs to the 'phage' integrase family. XerC subfamily. As to quaternary structure, forms a cyclic heterotetrameric complex composed of two molecules of XerC and two molecules of XerD.

The protein localises to the cytoplasm. Site-specific tyrosine recombinase, which acts by catalyzing the cutting and rejoining of the recombining DNA molecules. The XerC-XerD complex is essential to convert dimers of the bacterial chromosome into monomers to permit their segregation at cell division. It also contributes to the segregational stability of plasmids. The sequence is that of Tyrosine recombinase XerC from Roseiflexus castenholzii (strain DSM 13941 / HLO8).